The following is a 546-amino-acid chain: Chaperonin GroEL (546 aa).

ATP-binding positions include 29-32 (TLGP), 86-90 (DGTTT), G413, 476-478 (NAA), and D492. The tract at residues 521–546 (RPDESGNDAGAGAQGMDPSMMGGGMM) is disordered.

Belongs to the chaperonin (HSP60) family. Forms a cylinder of 14 subunits composed of two heptameric rings stacked back-to-back. Interacts with the co-chaperonin GroES.

It is found in the cytoplasm. The catalysed reaction is ATP + H2O + a folded polypeptide = ADP + phosphate + an unfolded polypeptide.. Together with its co-chaperonin GroES, plays an essential role in assisting protein folding. The GroEL-GroES system forms a nano-cage that allows encapsulation of the non-native substrate proteins and provides a physical environment optimized to promote and accelerate protein folding. The polypeptide is Chaperonin GroEL (Tetragenococcus halophilus (Pediococcus halophilus)).